Here is a 108-residue protein sequence, read N- to C-terminus: Insulin (108 aa).

The N-terminal stretch at 1–24 (MALWMHLLPLLALLALWGPEPAPA) is a signal peptide. 3 disulfides stabilise this stretch: C31/C94, C43/C107, and C93/C98. A propeptide spans 57–85 (EAEDLQVGQVELGGGSITGSLPPLEGPMQ) (c peptide).

The protein belongs to the insulin family. As to quaternary structure, heterodimer of a B chain and an A chain linked by two disulfide bonds.

The protein resides in the secreted. In terms of biological role, insulin decreases blood glucose concentration. It increases cell permeability to monosaccharides, amino acids and fatty acids. It accelerates glycolysis, the pentose phosphate cycle, and glycogen synthesis in liver. The sequence is that of Insulin (INS) from Aotus trivirgatus (Three-striped night monkey).